A 156-amino-acid chain; its full sequence is SsrA-binding protein (156 aa).

The span at 135-150 shows a compositional bias: basic and acidic residues; the sequence is KRDTIKDREWQRDRSR. Positions 135 to 156 are disordered; it reads KRDTIKDREWQRDRSRIMKKNT.

Belongs to the SmpB family.

The protein localises to the cytoplasm. Required for rescue of stalled ribosomes mediated by trans-translation. Binds to transfer-messenger RNA (tmRNA), required for stable association of tmRNA with ribosomes. tmRNA and SmpB together mimic tRNA shape, replacing the anticodon stem-loop with SmpB. tmRNA is encoded by the ssrA gene; the 2 termini fold to resemble tRNA(Ala) and it encodes a 'tag peptide', a short internal open reading frame. During trans-translation Ala-aminoacylated tmRNA acts like a tRNA, entering the A-site of stalled ribosomes, displacing the stalled mRNA. The ribosome then switches to translate the ORF on the tmRNA; the nascent peptide is terminated with the 'tag peptide' encoded by the tmRNA and targeted for degradation. The ribosome is freed to recommence translation, which seems to be the essential function of trans-translation. This Legionella pneumophila (strain Paris) protein is SsrA-binding protein.